Here is a 444-residue protein sequence, read N- to C-terminus: UDP-N-acetylmuramoylalanine--D-glutamate ligase (444 aa).

Residue 118 to 124 coordinates ATP; sequence GTNGKTT.

It belongs to the MurCDEF family.

Its subcellular location is the cytoplasm. The enzyme catalyses UDP-N-acetyl-alpha-D-muramoyl-L-alanine + D-glutamate + ATP = UDP-N-acetyl-alpha-D-muramoyl-L-alanyl-D-glutamate + ADP + phosphate + H(+). Its pathway is cell wall biogenesis; peptidoglycan biosynthesis. Cell wall formation. Catalyzes the addition of glutamate to the nucleotide precursor UDP-N-acetylmuramoyl-L-alanine (UMA). This Protochlamydia amoebophila (strain UWE25) protein is UDP-N-acetylmuramoylalanine--D-glutamate ligase.